Reading from the N-terminus, the 335-residue chain is tRNA N6-adenosine threonylcarbamoyltransferase (335 aa).

Residues His110 and His114 each contribute to the Fe cation site. Substrate-binding positions include 132–136 (LVSGG), Asp165, Gly178, and Asn271. Asp299 lines the Fe cation pocket.

This sequence belongs to the KAE1 / TsaD family. Fe(2+) serves as cofactor.

It is found in the cytoplasm. It carries out the reaction L-threonylcarbamoyladenylate + adenosine(37) in tRNA = N(6)-L-threonylcarbamoyladenosine(37) in tRNA + AMP + H(+). Its function is as follows. Required for the formation of a threonylcarbamoyl group on adenosine at position 37 (t(6)A37) in tRNAs that read codons beginning with adenine. Is involved in the transfer of the threonylcarbamoyl moiety of threonylcarbamoyl-AMP (TC-AMP) to the N6 group of A37, together with TsaE and TsaB. TsaD likely plays a direct catalytic role in this reaction. The chain is tRNA N6-adenosine threonylcarbamoyltransferase from Campylobacter jejuni subsp. jejuni serotype O:23/36 (strain 81-176).